The sequence spans 224 residues: Metalloproteinase inhibitor 4 (224 aa).

Residues Met1 to Ala29 form the signal peptide. Cys30 serves as a coordination point for Zn(2+). Involved in metalloproteinase-binding stretches follow at residues Cys30 to Ala33 and Ser99 to Ser100. 6 disulfides stabilise this stretch: Cys30/Cys102, Cys32/Cys131, Cys42/Cys156, Cys158/Cys205, Cys163/Cys168, and Cys176/Cys197. The NTR domain occupies Cys30 to Cys156.

The protein belongs to the protease inhibitor I35 (TIMP) family.

The protein resides in the secreted. In terms of biological role, complexes with metalloproteinases (such as collagenases) and irreversibly inactivates them by binding to their catalytic zinc cofactor. This Bos taurus (Bovine) protein is Metalloproteinase inhibitor 4 (TIMP4).